The sequence spans 247 residues: 5'-nucleotidase SurE (247 aa).

A divalent metal cation contacts are provided by D8, D9, S39, and N91.

Belongs to the SurE nucleotidase family. A divalent metal cation serves as cofactor.

It localises to the cytoplasm. It catalyses the reaction a ribonucleoside 5'-phosphate + H2O = a ribonucleoside + phosphate. In terms of biological role, nucleotidase that shows phosphatase activity on nucleoside 5'-monophosphates. This chain is 5'-nucleotidase SurE, found in Pelobacter propionicus (strain DSM 2379 / NBRC 103807 / OttBd1).